A 523-amino-acid chain; its full sequence is DNA-directed primase/polymerase protein (523 aa).

Residues Arg78, Asp117 to Glu119, and Lys168 to His172 contribute to the substrate site. 2 residues coordinate Mn(2+): Asp117 and Glu119. The interval Leu203 to Glu230 is disordered. Residues Arg258–Arg261 and Lys267 contribute to the substrate site. 4 residues coordinate Zn(2+): Cys390, His397, Cys417, and Cys422. The short motif at Cys390–Arg423 is the Zinc knuckle motif element. Residues Ala467–Ser477 show a composition bias toward low complexity. Residues Ala467–Glu523 are disordered. Acidic residues-rich tracts occupy residues Glu478–Asp488 and Glu498–Asp512.

This sequence belongs to the eukaryotic-type primase small subunit family. It depends on Mn(2+) as a cofactor.

It is found in the nucleus. The protein resides in the mitochondrion matrix. It localises to the chromosome. It carries out the reaction ssDNA + n NTP = ssDNA/pppN(pN)n-1 hybrid + (n-1) diphosphate.. The catalysed reaction is DNA(n) + a 2'-deoxyribonucleoside 5'-triphosphate = DNA(n+1) + diphosphate. Its function is as follows. DNA primase and DNA polymerase required to tolerate replication-stalling lesions by bypassing them. Required to facilitate mitochondrial and nuclear replication fork progression by initiating de novo DNA synthesis using dNTPs and acting as an error-prone DNA polymerase able to bypass certain DNA lesions. Shows a high capacity to tolerate DNA damage lesions such as 8oxoG and abasic sites in DNA. Provides different translesion synthesis alternatives when DNA replication is stalled: able to synthesize DNA primers downstream of lesions, such as UV lesions, R-loops and G-quadruplexes, to allow DNA replication to continue. Can also realign primers ahead of 'unreadable lesions' such as abasic sites and 6-4 photoproduct (6-4 pyrimidine-pyrimidinone), thereby skipping the lesion. Repriming avoids fork degradation while leading to accumulation of internal ssDNA gaps behind the forks. Also able to incorporate nucleotides opposite DNA lesions such as 8oxoG, like a regular translesion synthesis DNA polymerase. Also required for reinitiating stalled forks after ultraviolet (UV) damage during nuclear DNA replication. Required for mitochondrial DNA (mtDNA) synthesis and replication, by reinitiating synthesis after UV damage or in the presence of chain-terminating nucleotides. In addition to its role in DNA damage response, also required to maintain efficient nuclear and mitochondrial DNA replication in unperturbed cells. This Danio rerio (Zebrafish) protein is DNA-directed primase/polymerase protein.